Consider the following 95-residue polypeptide: Phosphoribosyl-ATP pyrophosphatase (95 aa).

This sequence belongs to the PRA-PH family.

It is found in the cytoplasm. It catalyses the reaction 1-(5-phospho-beta-D-ribosyl)-ATP + H2O = 1-(5-phospho-beta-D-ribosyl)-5'-AMP + diphosphate + H(+). It participates in amino-acid biosynthesis; L-histidine biosynthesis; L-histidine from 5-phospho-alpha-D-ribose 1-diphosphate: step 2/9. The chain is Phosphoribosyl-ATP pyrophosphatase from Methanosphaera stadtmanae (strain ATCC 43021 / DSM 3091 / JCM 11832 / MCB-3).